The primary structure comprises 328 residues: Dolichyl-diphosphooligosaccharide--protein glycosyltransferase subunit MAGT1 (328 aa).

Residues 1–22 (MAALPVLVLVLLLACGGPRAAG) form the signal peptide. The Extracellular segment spans residues 23–177 (QKRKEMVLSE…DVNIRVIRPP (155 aa)). Residues 40–168 (WTSKRSVIRM…LARWVADRTD (129 aa)) form the Thioredoxin domain. A glycan (N-linked (GlcNAc...) asparagine) is linked at N64. The cysteines at positions 80 and 83 are disulfide-linked. The chain crosses the membrane as a helical span at residues 178–198 (NYAGPLMLGLLLAVIGGLVYL). Over 199–211 (RGSNLDFLYNKTG) the chain is Cytoplasmic. Residues 212 to 232 (WAFAALCFVLAMTSGQMWNHI) form a helical membrane-spanning segment. The Extracellular segment spans residues 233-257 (RGPPYAHKNPHTGQVNYIHGSSQAQ). Residues 258–278 (FVAETHIVLLFNGGVTLGMVL) form a helical membrane-spanning segment. Over 279–293 (LHEAATSDMDVGKRK) the chain is Cytoplasmic. A helical membrane pass occupies residues 294 to 314 (IMCIAGIGLVVFFFSWLLSVF). Topologically, residues 315-328 (RSKYHGYPYSFLMS) are extracellular.

The protein belongs to the OST3/OST6 family. In terms of assembly, accessory component of the STT3B-containing form of the oligosaccharyltransferase (OST) complex. OST exists in two different complex forms which contain common core subunits RPN1, RPN2, OST48, OST4, DAD1 and TMEM258, either STT3A or STT3B as catalytic subunits, and form-specific accessory subunits. OST can form stable complexes with the Sec61 complex or with both the Sec61 and TRAP complexes.

The protein resides in the cell membrane. Its subcellular location is the endoplasmic reticulum. It is found in the endoplasmic reticulum membrane. Its pathway is protein modification; protein glycosylation. Accessory component of the STT3B-containing form of the N-oligosaccharyl transferase (OST) complex which catalyzes the transfer of a high mannose oligosaccharide from a lipid-linked oligosaccharide donor to an asparagine residue within an Asn-X-Ser/Thr consensus motif in nascent polypeptide chains. Involved in N-glycosylation of STT3B-dependent substrates. Specifically required for the glycosylation of a subset of acceptor sites that are near cysteine residues; in this function seems to act redundantly with TUSC3. In its oxidized form proposed to form transient mixed disulfides with a glycoprotein substrate to facilitate access of STT3B to the unmodified acceptor site. Also has oxidoreductase-independent functions in the STT3B-containing OST complex possibly involving substrate recognition. Could indirectly play a role in Mg(2+) transport in epithelial cells. This chain is Dolichyl-diphosphooligosaccharide--protein glycosyltransferase subunit MAGT1, found in Gallus gallus (Chicken).